The chain runs to 342 residues: DNA repair protein RAD51 homolog 1 (342 aa).

Residues 1–24 (MTTMEQRRNQNAVQQQDDEETQHG) are disordered. Residues 51–80 (TVEGVAYTPRKDLLQIKGISDAKVDKIVEA) form the HhH domain. Positions 100–314 (QEIIQITSGS…LRKGRAEERI (215 aa)) constitute a FtsK domain. 130–137 (GEFRSGKT) lines the ATP pocket.

Belongs to the RecA family. RAD51 subfamily. Self-associates and interacts with XRCC3. Binds to RAD54/CHR25. Interacts with BRCA2A and BRCA2B. Can form a tripartite complex with both BRCA2B and DSS1(I). As to expression, detected in various tissues. Higher expression in reproductive tissues than in vegetative tissues, with the highest expression level in young flower buds. At cellular level, is expressed at low levels in flower primordia, then at higher levels in young anthers and at highest levels in both females and males meiocytes. Not detected in gametophytes.

Its subcellular location is the nucleus. In terms of biological role, binds to single and double-stranded DNA and exhibits DNA-dependent ATPase activity. Unwinds duplex DNA. Component of the meiotic recombination pathway. Seems to play a role in mediating chromosome homology search, chromosome pairing and synapsis at early stages and probably chromosome crossing-over at later stages in meiosis. Probably is involved in the repair of meiotic double strand breaks (DBSs) generated by AtSPO11-1 and in homologous recombination. Its function is dispensable for vegetative growth and root mitosis. This Arabidopsis thaliana (Mouse-ear cress) protein is DNA repair protein RAD51 homolog 1.